The primary structure comprises 249 residues: Phosphoribosylaminoimidazole-succinocarboxamide synthase (249 aa).

Belongs to the SAICAR synthetase family.

The catalysed reaction is 5-amino-1-(5-phospho-D-ribosyl)imidazole-4-carboxylate + L-aspartate + ATP = (2S)-2-[5-amino-1-(5-phospho-beta-D-ribosyl)imidazole-4-carboxamido]succinate + ADP + phosphate + 2 H(+). Its pathway is purine metabolism; IMP biosynthesis via de novo pathway; 5-amino-1-(5-phospho-D-ribosyl)imidazole-4-carboxamide from 5-amino-1-(5-phospho-D-ribosyl)imidazole-4-carboxylate: step 1/2. The chain is Phosphoribosylaminoimidazole-succinocarboxamide synthase from Chloroflexus aurantiacus (strain ATCC 29366 / DSM 635 / J-10-fl).